The following is a 35-amino-acid chain: MSDIN-like toxin proprotein 6 (35 aa).

Residues 1 to 10 (MSDINGTRLP) constitute a propeptide that is removed on maturation. A cross-link (cyclopeptide (Ile-Pro)) is located at residues 11 to 20 (IPGLIPLGIP). The propeptide occupies 21–35 (CVSDDVNPTLTRGER).

The protein belongs to the MSDIN fungal toxin family. Processed by the macrocyclase-peptidase enzyme POPB to yield a toxic cyclic decapeptide. POPB first removes 10 residues from the N-terminus. Conformational trapping of the remaining peptide forces the enzyme to release this intermediate rather than proceed to macrocyclization. The enzyme rebinds the remaining peptide in a different conformation and catalyzes macrocyclization of the N-terminal 10 residues.

Its function is as follows. Probable toxin that belongs to the MSDIN-like toxin family responsible for a large number of food poisoning cases and deaths. This is MSDIN-like toxin proprotein 6 from Amanita bisporigera (Destroying angel).